The sequence spans 39 residues: uncharacterized protein (39 aa).

The signal sequence occupies residues 1-21 (MHLRSRWWLALLYCKDPVSRS).

This is an uncharacterized protein from Saccharomyces cerevisiae (strain ATCC 204508 / S288c) (Baker's yeast).